A 214-amino-acid polypeptide reads, in one-letter code: Probable transaldolase (214 aa).

Lys83 functions as the Schiff-base intermediate with substrate in the catalytic mechanism.

It belongs to the transaldolase family. Type 3B subfamily.

The protein localises to the cytoplasm. The enzyme catalyses D-sedoheptulose 7-phosphate + D-glyceraldehyde 3-phosphate = D-erythrose 4-phosphate + beta-D-fructose 6-phosphate. Its pathway is carbohydrate degradation; pentose phosphate pathway; D-glyceraldehyde 3-phosphate and beta-D-fructose 6-phosphate from D-ribose 5-phosphate and D-xylulose 5-phosphate (non-oxidative stage): step 2/3. Transaldolase is important for the balance of metabolites in the pentose-phosphate pathway. This is Probable transaldolase from Geobacter metallireducens (strain ATCC 53774 / DSM 7210 / GS-15).